A 108-amino-acid polypeptide reads, in one-letter code: UPF0060 membrane protein Mfla_0485 (108 aa).

A run of 4 helical transmembrane segments spans residues 7–27 (FSLFILTALAEILGCYLPYLW), 33–53 (SVWLLLPAAISLAVFAWLLSL), 63–83 (AAYGGVYIFVALGWLWLVDGI), and 87–107 (TWDFVGVGVALAGMAIIMFAP).

The protein belongs to the UPF0060 family.

The protein localises to the cell inner membrane. This Methylobacillus flagellatus (strain ATCC 51484 / DSM 6875 / VKM B-1610 / KT) protein is UPF0060 membrane protein Mfla_0485.